A 404-amino-acid chain; its full sequence is Zinc metalloprotease Rip1 (404 aa).

Residues 1 to 21 (MMFVTGIVLFALAILISVALH) traverse the membrane as a helical segment. Histidine 21 is a Zn(2+) binding site. Glutamate 22 is a catalytic residue. Histidine 25 contributes to the Zn(2+) binding site. A helical membrane pass occupies residues 104 to 124 (PGMNLAICLVLIYAIALVWGL). Residues 121 to 203 (VWGLPNLHPP…SVPIVVERDG (83 aa)) enclose the PDZ domain. Zn(2+) is bound at residue aspartate 202. 2 helical membrane passes run 313–333 (LWVAFWFFLAQLNLILAAINL) and 373–393 (LLPATYVVLVLVVGYMLLTVT).

The protein belongs to the peptidase M50B family. Zn(2+) is required as a cofactor.

The protein localises to the cell membrane. Its function is as follows. A probable site-2 protease (S2P) that cleaves type-2 transmembrane proteins within their membrane-spanning domains. Degrades anti-sigma factors RskA, RslA and RsmA, releasing sigma factors SigK, SigL and SigM from the cellular membrane, activating signaling pathways. Does not act on RsdA. Regulates the composition of extractable mycolic acids in the cell envelope in response to changes in membrane fluidity. Mediates transcriptional regulation of mycolic acid biosynthetic genes in response to detergent. Probably also cleaves PbpB (PBP3, FtsI); this cleavage is inhibited by Wag31-PbpBI interaction. Functionally, regulated intramembrane proteolysis (RIP) occurs when an extracytoplasmic signal (possibly oxidative stress) triggers a concerted proteolytic cascade to transmit information and elicit cellular responses. The membrane-spanning regulatory substrate protein (includes anti-sigma factors RskA, RslA, RsmA, and PbpB) is first cut extracytoplasmically (site-1 protease, S1P), then within the membrane itself (site-2 protease, S2P, this entry), while cytoplasmic proteases finish degrading the regulatory protein, liberating the effector protein (ECF sigma factors SigK, SigL and SigM). The polypeptide is Zinc metalloprotease Rip1 (rip1) (Mycobacterium tuberculosis (strain ATCC 35801 / TMC 107 / Erdman)).